The primary structure comprises 308 residues: Uricase-2 isozyme 1 (308 aa).

Active-site charge relay system residues include K17 and T63. Urate-binding residues include T63, D64, F165, R182, V237, Q238, and N264. Residue H266 is the Charge relay system of the active site. Positions 306–308 (SKL) match the Microbody targeting signal motif.

This sequence belongs to the uricase family.

The protein resides in the peroxisome. The catalysed reaction is urate + O2 + H2O = 5-hydroxyisourate + H2O2. The protein operates within purine metabolism; urate degradation; (S)-allantoin from urate: step 1/3. Functionally, catalyzes the oxidation of uric acid to 5-hydroxyisourate, which is further processed to form (S)-allantoin. This chain is Uricase-2 isozyme 1, found in Canavalia lineata (Beach bean).